The sequence spans 217 residues: Probable GTP-binding protein EngB (217 aa).

In terms of domain architecture, EngB-type G spans 37 to 214 (DGVEIAFAGR…RAAMAKLLEE (178 aa)). GTP is bound by residues 45 to 52 (GRSNVGKS), 72 to 76 (GRTQE), 92 to 95 (DMPG), 159 to 162 (TKAD), and 193 to 195 (TSS). Mg(2+) is bound by residues serine 52 and threonine 74.

Belongs to the TRAFAC class TrmE-Era-EngA-EngB-Septin-like GTPase superfamily. EngB GTPase family. It depends on Mg(2+) as a cofactor.

Its function is as follows. Necessary for normal cell division and for the maintenance of normal septation. In Bradyrhizobium diazoefficiens (strain JCM 10833 / BCRC 13528 / IAM 13628 / NBRC 14792 / USDA 110), this protein is Probable GTP-binding protein EngB.